A 432-amino-acid polypeptide reads, in one-letter code: Enolase (432 aa).

Gln166 serves as a coordination point for (2R)-2-phosphoglycerate. The active-site Proton donor is Glu210. Positions 247, 288, and 315 each coordinate Mg(2+). 4 residues coordinate (2R)-2-phosphoglycerate: Lys340, Arg369, Ser370, and Lys391. The Proton acceptor role is filled by Lys340.

It belongs to the enolase family. Mg(2+) is required as a cofactor.

The protein resides in the cytoplasm. It localises to the secreted. Its subcellular location is the cell surface. The enzyme catalyses (2R)-2-phosphoglycerate = phosphoenolpyruvate + H2O. It functions in the pathway carbohydrate degradation; glycolysis; pyruvate from D-glyceraldehyde 3-phosphate: step 4/5. Its function is as follows. Catalyzes the reversible conversion of 2-phosphoglycerate (2-PG) into phosphoenolpyruvate (PEP). It is essential for the degradation of carbohydrates via glycolysis. The chain is Enolase from Aeropyrum pernix (strain ATCC 700893 / DSM 11879 / JCM 9820 / NBRC 100138 / K1).